The sequence spans 498 residues: Protein flp (498 aa).

4 consecutive transmembrane segments (helical) span residues 6–26, 389–409, 433–453, and 471–491; these read LYFLSISIIILVAISIAIHIT, FNIVTVLMTTLILLAFIFSAY, LTLCLCIAIALILYALPYLIL, and LALITTLIALFSTLIVILLFL.

It is found in the cell membrane. Its precise function is unknown. Has no penicillin-binding activity and is not involved in methicillin resistance. The sequence is that of Protein flp (flp) from Staphylococcus aureus (strain MW2).